A 498-amino-acid polypeptide reads, in one-letter code: Inosine-5'-monophosphate dehydrogenase (498 aa).

2 consecutive CBS domains span residues 98–155 (MVVN…EQKI) and 159–216 (MTRE…PHAS). NAD(+) is bound by residues aspartate 253 and 303–305 (GIG). 2 residues coordinate K(+): glycine 305 and glycine 307. Serine 308 serves as a coordination point for IMP. Residue cysteine 310 coordinates K(+). The active-site Thioimidate intermediate is cysteine 310. Residues 343–345 (DGG), 366–367 (GS), and 390–394 (YRGMG) contribute to the IMP site. The active-site Proton acceptor is the arginine 406. Glutamate 421 is an IMP binding site. K(+) is bound by residues glutamate 475, serine 476, and histidine 477.

Belongs to the IMPDH/GMPR family. In terms of assembly, homotetramer. It depends on K(+) as a cofactor.

It catalyses the reaction IMP + NAD(+) + H2O = XMP + NADH + H(+). The protein operates within purine metabolism; XMP biosynthesis via de novo pathway; XMP from IMP: step 1/1. Its activity is regulated as follows. Mycophenolic acid (MPA) is a non-competitive inhibitor that prevents formation of the closed enzyme conformation by binding to the same site as the amobile flap. In contrast, mizoribine monophosphate (MZP) is a competitive inhibitor that induces the closed conformation. MPA is a potent inhibitor of mammalian IMPDHs but a poor inhibitor of the bacterial enzymes. MZP is a more potent inhibitor of bacterial IMPDH. Its function is as follows. Catalyzes the conversion of inosine 5'-phosphate (IMP) to xanthosine 5'-phosphate (XMP), the first committed and rate-limiting step in the de novo synthesis of guanine nucleotides, and therefore plays an important role in the regulation of cell growth. This chain is Inosine-5'-monophosphate dehydrogenase, found in Rhizobium tropici.